The sequence spans 184 residues: Large ribosomal subunit protein uL22 (184 aa).

The disordered stretch occupies residues 160–184; sequence PEEEVAQKKKISQKKLKKQKLMARE. The segment covering 167–184 has biased composition (basic residues); it reads KKKISQKKLKKQKLMARE.

The protein belongs to the universal ribosomal protein uL22 family. In terms of assembly, component of the large ribosomal subunit. As to expression, expressed in pancreas, lung, colon, cystic duct, gall bladder, kidney and liver. Expressed at high levels in the well differentiated pancreatic tumor cell lines HPAF, COLO 357 and Capan-1, the moderately differentiated pancreatic tumor cell lines T3M-4, AsPc-1 and BxPc-3, the poorly differentiated pancreatic tumor cell line MIA PaCa-2, and the pancreatic tumor cell lines of undefined differentiation status such as SW979. Expressed at lower levels in the poorly differentiated pancreatic tumor cell lines HCG-25 and PANC-1.

The protein resides in the cytoplasm. Functionally, component of the large ribosomal subunit. The ribosome is a large ribonucleoprotein complex responsible for the synthesis of proteins in the cell. This is Large ribosomal subunit protein uL22 (RPL17) from Homo sapiens (Human).